The sequence spans 101 residues: Small ribosomal subunit protein bS18c (101 aa).

The protein belongs to the bacterial ribosomal protein bS18 family. As to quaternary structure, part of the 30S ribosomal subunit.

Its subcellular location is the plastid. It is found in the chloroplast. The sequence is that of Small ribosomal subunit protein bS18c from Panax ginseng (Korean ginseng).